We begin with the raw amino-acid sequence, 64 residues long: Bactridin-2 (64 aa).

One can recognise an LCN-type CS-alpha/beta domain in the interval 1–63 (KDGYLVGNDG…TWNRATNRCG (63 aa)). 4 disulfide bridges follow: cysteine 11–cysteine 62, cysteine 15–cysteine 37, cysteine 23–cysteine 43, and cysteine 27–cysteine 45.

It belongs to the long (4 C-C) scorpion toxin superfamily. Sodium channel inhibitor family. Beta subfamily. Expressed by the venom gland.

Its subcellular location is the secreted. Functionally, shows antibacterial activity against both Gram-positive bacteria (B.subtilis, M.luteus, E.faecalis) and Gram-negative bacteria (P.aeruginosa, Y.enterocolitica, A.calcoaceticus). Modifies membrane sodium permeability on Y.enterocolitica. Is toxic to mice, but is not to crabs. Induces concentration dependent haemolysis in human erythrocytes. Acts by inhibiting the sodium (Nav) currents. This Tityus discrepans (Venezuelan scorpion) protein is Bactridin-2.